The following is a 1044-amino-acid chain: Eukaryotic translation initiation factor 3 subunit A (1044 aa).

A coiled-coil region spans residues 92 to 121; sequence LKKFIELAEKKVTEAQAKADEIQSSLESAA. The 185-residue stretch at 339–523 folds into the PCI domain; the sequence is MTKAASFVLL…GVLTFDTDIF (185 aa). The stretch at 611–907 forms a coiled coil; that stretch reads IDKKKEAATD…EARRAARKAG (297 aa). Residues 797–901 show a composition bias toward basic and acidic residues; it reads SEKRHEEFEK…QREEEAEARR (105 aa). Residues 797–1044 are disordered; that stretch reads SEKRHEEFEK…WVPRWKQQQS (248 aa). 2 stretches are compositionally biased toward low complexity: residues 943 to 956 and 1006 to 1017; these read KEAAGGAAPAAAPA and SSSSQPPSRTQT.

This sequence belongs to the eIF-3 subunit A family. As to quaternary structure, component of the eukaryotic translation initiation factor 3 (eIF-3) complex.

It is found in the cytoplasm. In terms of biological role, RNA-binding component of the eukaryotic translation initiation factor 3 (eIF-3) complex, which is involved in protein synthesis of a specialized repertoire of mRNAs and, together with other initiation factors, stimulates binding of mRNA and methionyl-tRNAi to the 40S ribosome. The eIF-3 complex specifically targets and initiates translation of a subset of mRNAs involved in cell proliferation. The polypeptide is Eukaryotic translation initiation factor 3 subunit A (tif32) (Aspergillus clavatus (strain ATCC 1007 / CBS 513.65 / DSM 816 / NCTC 3887 / NRRL 1 / QM 1276 / 107)).